A 223-amino-acid chain; its full sequence is MIF4G domain-containing protein A (223 aa).

The region spanning 7 to 206 is the MIF4G domain; sequence QEDYKMQAFD…LEMIEYRAAG (200 aa).

It belongs to the MIF4GD family. As to quaternary structure, interacts with eif4g1, eif4g2 and slbp; probably tethered by SLBP to the 3'-end of mRNAs ending with the histone stem-loop, it also interacts with eif4g1 which is bound to their 5'-end.

The protein localises to the cytoplasm. The protein resides in the nucleus. Functions in replication-dependent translation of histone mRNAs which differ from other eukaryotic mRNAs in that they do not end with a poly-A tail but a stem-loop. May participate in circularizing those mRNAs specifically enhancing their translation. This Xenopus laevis (African clawed frog) protein is MIF4G domain-containing protein A (mif4gd-a).